A 456-amino-acid polypeptide reads, in one-letter code: Bifunctional protein GlmU (456 aa).

Positions 1–229 are pyrophosphorylase; the sequence is MLNSAMSVVI…ISETDGVNNR (229 aa). Residues 11–14, Lys-25, Gln-76, 81–82, 103–105, Gly-140, Glu-154, Asn-169, and Asn-227 contribute to the UDP-N-acetyl-alpha-D-glucosamine site; these read LAAG, GT, and YGD. Residue Asp-105 participates in Mg(2+) binding. A Mg(2+)-binding site is contributed by Asn-227. Residues 230–250 are linker; it reads LQLSRLERIYQAEQAEKLLLS. The interval 251–456 is N-acetyltransferase; it reads GVMLRDPARF…QGWQRPVKKK (206 aa). 2 residues coordinate UDP-N-acetyl-alpha-D-glucosamine: Arg-333 and Lys-351. His-363 serves as the catalytic Proton acceptor. UDP-N-acetyl-alpha-D-glucosamine-binding residues include Tyr-366 and Asn-377. Acetyl-CoA-binding positions include Ala-380, 386 to 387, Ser-405, Ala-423, and Arg-440; that span reads NY.

In the N-terminal section; belongs to the N-acetylglucosamine-1-phosphate uridyltransferase family. The protein in the C-terminal section; belongs to the transferase hexapeptide repeat family. In terms of assembly, homotrimer. Mg(2+) serves as cofactor.

It is found in the cytoplasm. The catalysed reaction is alpha-D-glucosamine 1-phosphate + acetyl-CoA = N-acetyl-alpha-D-glucosamine 1-phosphate + CoA + H(+). It carries out the reaction N-acetyl-alpha-D-glucosamine 1-phosphate + UTP + H(+) = UDP-N-acetyl-alpha-D-glucosamine + diphosphate. It functions in the pathway nucleotide-sugar biosynthesis; UDP-N-acetyl-alpha-D-glucosamine biosynthesis; N-acetyl-alpha-D-glucosamine 1-phosphate from alpha-D-glucosamine 6-phosphate (route II): step 2/2. It participates in nucleotide-sugar biosynthesis; UDP-N-acetyl-alpha-D-glucosamine biosynthesis; UDP-N-acetyl-alpha-D-glucosamine from N-acetyl-alpha-D-glucosamine 1-phosphate: step 1/1. The protein operates within bacterial outer membrane biogenesis; LPS lipid A biosynthesis. Catalyzes the last two sequential reactions in the de novo biosynthetic pathway for UDP-N-acetylglucosamine (UDP-GlcNAc). The C-terminal domain catalyzes the transfer of acetyl group from acetyl coenzyme A to glucosamine-1-phosphate (GlcN-1-P) to produce N-acetylglucosamine-1-phosphate (GlcNAc-1-P), which is converted into UDP-GlcNAc by the transfer of uridine 5-monophosphate (from uridine 5-triphosphate), a reaction catalyzed by the N-terminal domain. The protein is Bifunctional protein GlmU of Salmonella paratyphi A (strain ATCC 9150 / SARB42).